Here is a 422-residue protein sequence, read N- to C-terminus: Enolase (422 aa).

A (2R)-2-phosphoglycerate-binding site is contributed by glutamine 161. Glutamate 203 serves as the catalytic Proton donor. Residues aspartate 240, glutamate 283, and aspartate 310 each contribute to the Mg(2+) site. Positions 335, 364, 365, and 386 each coordinate (2R)-2-phosphoglycerate. The active-site Proton acceptor is lysine 335.

Belongs to the enolase family. Mg(2+) serves as cofactor.

The protein localises to the cytoplasm. Its subcellular location is the secreted. It localises to the cell surface. It carries out the reaction (2R)-2-phosphoglycerate = phosphoenolpyruvate + H2O. It participates in carbohydrate degradation; glycolysis; pyruvate from D-glyceraldehyde 3-phosphate: step 4/5. Functionally, catalyzes the reversible conversion of 2-phosphoglycerate (2-PG) into phosphoenolpyruvate (PEP). It is essential for the degradation of carbohydrates via glycolysis. The sequence is that of Enolase from Deinococcus geothermalis (strain DSM 11300 / CIP 105573 / AG-3a).